Reading from the N-terminus, the 431-residue chain is DNA polymerase delta subunit 3 (431 aa).

The segment at 64–80 is necessary for function, possibly resulting from its inability to interact with PolD2; sequence QGSDSGEDLYSVVLESR. Residues 128–431 are disordered; that stretch reads PGAGKIVPSA…AGIMNFFSKK (304 aa). Low complexity predominate over residues 156-171; that stretch reads SKSAVKLEPSKSSLKS. Composition is skewed to basic and acidic residues over residues 172–200 and 252–271; these read EPAK…EQAS and SPPE…NKKE. Positions 278–290 are enriched in low complexity; the sequence is PSPTKKPTTANTS. Positions 294-307 are enriched in acidic residues; the sequence is FDEESAESSDEEEK. Basic and acidic residues-rich tracts occupy residues 308–328 and 343–362; these read LDML…EKAS and QPPK…KMDT. The segment covering 387 to 411 has biased composition (low complexity); sequence PANKKVSPKAAAPVNKKKSPPSAAK.

Component of both the DNA polymerase delta and DNA polymerase zeta complexes. The DNA polymerase delta complex consists of three subunits: the catalytic subunit PolD1 and two accessory subunits PolD2/Pol31 and PolD3/Pol32. Within the delta complex, interacts with both PolD1 and PolD2. Component of the DNA polymerase zeta complex consisting of four subunits: the catalytic subunit PolZ1 and three accessory subunits PolZ2/Rev7, PolD2/Pol31 and PolD3/Pol32. In terms of tissue distribution, expressed in ovaries (at the protein level). Expressed in ovaries.

Its subcellular location is the nucleus. It localises to the nucleoplasm. Functionally, accessory component of the DNA polymerase delta complex and possibly the DNA polymerase zeta complex. As a component of the delta complex, participates in high fidelity genome replication, including lagging strand synthesis, DNA recombination and repair. Required to recruit the DNA polymerase delta complex to the nucleus of rapidly dividing embryonic cells, and as a consequence is essential for genome replication during the earliest cell cycles. Increases the efficiency and processivity of DNA synthesis of the DNA polymerases during mitotic DNA replication and repair. During development this function is essential for preventing replication stress that results in the formation of chromosomal fragile sites (CFS) such as chromosomal breaks. Ensures genomic stability by promoting several types of DNA repair mechanisms including repairing broken dicentric chromosomes through homolog-dependent break-induced replication (BIR). During homologous recombination (HR) repair, required for maintaining the processivity of the delta complex during break-induced replication; a form of HR that requires extensive DNA synthesis such as the repair of large gaps. Able to suppress position effect variegation and may therefore have a role in the induction of chromatin state changes that likely include its activities in DNA replication and repair. This chain is DNA polymerase delta subunit 3, found in Drosophila melanogaster (Fruit fly).